Here is a 352-residue protein sequence, read N- to C-terminus: Histidine protein kinase SaeS (352 aa).

Transmembrane regions (helical) follow at residues 9 to 29 (QIII…VIAY) and 41 to 61 (TLAI…SIFI). Residues 130–349 (NLAHDLKTPL…TMTLTLKKFQ (220 aa)) form the Histidine kinase domain. A Phosphohistidine; by autocatalysis modification is found at His133.

Autophosphorylated.

It localises to the cell membrane. It carries out the reaction ATP + protein L-histidine = ADP + protein N-phospho-L-histidine.. Functionally, member of the two-component regulatory system SaeR/SaeS. Probably functions as a membrane-associated protein kinase that upon sensing the appropriate signal, autophosphorylates and in turn activates the cytosolic response regulator SaeR. The polypeptide is Histidine protein kinase SaeS (saeS) (Staphylococcus epidermidis (strain ATCC 35984 / DSM 28319 / BCRC 17069 / CCUG 31568 / BM 3577 / RP62A)).